Here is a 101-residue protein sequence, read N- to C-terminus: MIPGQYQIQPGEIELNAGRRTLRLNVSNSGDRPIQVGSHYHFFETNDALTFDRAASRGMRLNIAAGTAVRFEPGQTREVELVELAGKRRVFGFAGRIMGDL.

Belongs to the urease beta subunit family. In terms of assembly, heterotrimer of UreA (gamma), UreB (beta) and UreC (alpha) subunits. Three heterotrimers associate to form the active enzyme.

It is found in the cytoplasm. The enzyme catalyses urea + 2 H2O + H(+) = hydrogencarbonate + 2 NH4(+). The protein operates within nitrogen metabolism; urea degradation; CO(2) and NH(3) from urea (urease route): step 1/1. The chain is Urease subunit beta from Pseudomonas fluorescens (strain ATCC BAA-477 / NRRL B-23932 / Pf-5).